Consider the following 596-residue polypeptide: Phosphoprotein (596 aa).

Composition is skewed to polar residues over residues 1 to 11 (MENNAKDNQIM), 38 to 66 (TDSQENTADSNEVNTGNKRLSTTIYQLES), and 74 to 85 (ENSGSVNENRQL). Disordered stretches follow at residues 1-25 (MENNAKDNQIMDSWEEGSGDKSSDI), 38-196 (TDSQ…ESIS), and 220-352 (KNTR…EEST). Residues 33-41 (EFILSTDSQ) are N0 binding. Over residues 88-97 (SHERATETKN) the composition is skewed to basic and acidic residues. The span at 127–144 (ISRSSPDPNNGTQIQESI) shows a compositional bias: polar residues. Composition is skewed to basic and acidic residues over residues 151–168 (EMDKDSAKREMRQSKDVP) and 233–249 (EDDKGIKKGVGKPEDTN). Residues 270–324 (TLKISTTTGESTRPQSGSQGKRITSWNILNSESGSRTESTSQNSQIPTSGKSNTV) are compositionally biased toward polar residues. Residues 331–352 (LESRIKTQKTDGKEREDTEEST) are compositionally biased toward basic and acidic residues. The multimerization stretch occupies residues 374–441 (LDLYQDKRVV…KMDESHRRLI (68 aa)). A coiled-coil region spans residues 416-436 (LNQIQNEILSLKTDLKKMDES). The interval 442–475 (ENQKEQLSLITSLISNLKIMTERGGKKDQPENSG) is l protein binding.

Belongs to the respirovirus P protein family. In terms of assembly, homotetramer. Interacts (via multimerization domain) with polymerase L; this interaction forms the polymerase complex. Interacts (via N-terminus) with N0; this interaction allows P to chaperon N0 before encapsidation and form the N-P complex. Interacts (via C-terminus) with N-RNA template; this interaction positions the polymerase on the template.

Functionally, essential cofactor of the RNA polymerase L that plays a central role in the transcription and replication by forming the polymerase complex with RNA polymerase L and recruiting L to the genomic N-RNA template for RNA synthesis. Also plays a central role in the encapsidation of nascent RNA chains by forming the encapsidation complex with the nucleocapsid protein N (N-P complex). Acts as a chaperone for newly synthesized free N protein, so-called N0, allowing encapsidation of nascent RNA chains during replication. The nucleoprotein protein N prevents excessive phosphorylation of P, which leads to down-regulation of viral transcription/ replication. Participates, together with N, in the formation of viral factories (viroplasms), which are large inclusions in the host cytoplasm where replication takes place. Recruits host PI4KB and remodel the host endoplasmic reticulum membrane to form viral replication factories. The protein is Phosphoprotein (P/V/D) of Bovine parainfluenza 3 virus (BPIV-3).